Consider the following 154-residue polypeptide: Endoribonuclease YbeY (154 aa).

Zn(2+) is bound by residues histidine 113, histidine 117, and histidine 123.

It belongs to the endoribonuclease YbeY family. The cofactor is Zn(2+).

It is found in the cytoplasm. Functionally, single strand-specific metallo-endoribonuclease involved in late-stage 70S ribosome quality control and in maturation of the 3' terminus of the 16S rRNA. This is Endoribonuclease YbeY from Aeromonas salmonicida (strain A449).